The chain runs to 404 residues: Argininosuccinate synthase (404 aa).

ATP is bound by residues 11 to 19 (AYSGGLDTS) and Ala40. L-citrulline-binding residues include Tyr92 and Ser97. Gly122 provides a ligand contact to ATP. 3 residues coordinate L-aspartate: Thr124, Asn128, and Asp129. Asn128 is an L-citrulline binding site. Arg132, Ser181, Ser190, Glu266, and Tyr278 together coordinate L-citrulline.

It belongs to the argininosuccinate synthase family. Type 1 subfamily. In terms of assembly, homotetramer.

Its subcellular location is the cytoplasm. It carries out the reaction L-citrulline + L-aspartate + ATP = 2-(N(omega)-L-arginino)succinate + AMP + diphosphate + H(+). The protein operates within amino-acid biosynthesis; L-arginine biosynthesis; L-arginine from L-ornithine and carbamoyl phosphate: step 2/3. The protein is Argininosuccinate synthase of Moritella abyssi.